Here is a 235-residue protein sequence, read N- to C-terminus: Protein C1orf43 homolog (235 aa).

A helical transmembrane segment spans residues 11 to 31; it reads VNVVLVMAYGSLVFVLLFIFV.

Its subcellular location is the membrane. It is found in the golgi apparatus. The protein localises to the mitochondrion. General regulator of phagocytosis. Required to uptake Gram negative bacterium by macrophages. The polypeptide is Protein C1orf43 homolog (Rattus norvegicus (Rat)).